The primary structure comprises 424 residues: Methylthioribose-1-phosphate isomerase (424 aa).

Asp-281 acts as the Proton donor in catalysis.

This sequence belongs to the eIF-2B alpha/beta/delta subunits family. MtnA subfamily.

It localises to the cytoplasm. The protein resides in the nucleus. The enzyme catalyses 5-(methylsulfanyl)-alpha-D-ribose 1-phosphate = 5-(methylsulfanyl)-D-ribulose 1-phosphate. The protein operates within amino-acid biosynthesis; L-methionine biosynthesis via salvage pathway; L-methionine from S-methyl-5-thio-alpha-D-ribose 1-phosphate: step 1/6. Its function is as follows. Catalyzes the interconversion of methylthioribose-1-phosphate (MTR-1-P) into methylthioribulose-1-phosphate (MTRu-1-P). In Candida dubliniensis (strain CD36 / ATCC MYA-646 / CBS 7987 / NCPF 3949 / NRRL Y-17841) (Yeast), this protein is Methylthioribose-1-phosphate isomerase.